A 611-amino-acid chain; its full sequence is Serine protease FAM111A (611 aa).

Positions 16–28 (KCNMKIEHYFSPV) match the PIP-box motif. Residue K20 forms a Glycyl lysine isopeptide (Lys-Gly) (interchain with G-Cter in SUMO2) linkage. S26 is modified (phosphoserine). Residues K30 and K65 each participate in a glycyl lysine isopeptide (Lys-Gly) (interchain with G-Cter in SUMO2) cross-link. The segment at 44-73 (ESRGDPRATTNTQAQRFHSPKKNPEDQTMP) is disordered. Residues 336–611 (KVTKNSSSIK…DVEMMSDEDL (276 aa)) are interaction with SV40 large T antigen. Active-site charge relay system residues include H385, D439, and S541.

Belongs to the FAM111 family. In terms of assembly, interacts (via PIP-box) with PCNA; then interaction is direct. (Microbial infection) Interacts with SV40 virus large T antigen and this interaction is required for efficient viral replication and sustained viral gene expression in restrictive cell types. As to quaternary structure, (Microbial infection) Interacts with vaccinia virus protein OPG079; this interaction promotes the degradation of OPG079. Autocatalytically cleaved; activating the protein. Autocatalytic cleavage takes place in trans.

The protein localises to the nucleus. It localises to the chromosome. The protein resides in the cytoplasm. Its function is as follows. Single-stranded DNA-binding serine protease that mediates the proteolytic cleavage of covalent DNA-protein cross-links (DPCs) during DNA synthesis, thereby playing a key role in maintaining genomic integrity. DPCs are highly toxic DNA lesions that interfere with essential chromatin transactions, such as replication and transcription, and which are induced by reactive agents, such as UV light or formaldehyde. Protects replication fork from stalling by removing DPCs, such as covalently trapped topoisomerase 1 (TOP1) adducts on DNA lesion, or poly(ADP-ribose) polymerase 1 (PARP1)-DNA complexes trapped by PARP inhibitors. Required for PCNA loading on replication sites. Promotes S-phase entry and DNA synthesis. Also acts as a restriction factor for some viruses including SV40 polyomavirus and vaccinia virus. Mechanistically, affects nuclear barrier function during viral replication by mediating the disruption of the nuclear pore complex (NPC) via its protease activity. In turn, interacts with vaccinia virus DNA-binding protein OPG079 in the cytoplasm and promotes its degradation without the need of its protease activity but through autophagy. The polypeptide is Serine protease FAM111A (Homo sapiens (Human)).